The following is a 139-amino-acid chain: Small ribosomal subunit protein bS6 (139 aa).

It belongs to the bacterial ribosomal protein bS6 family.

Binds together with bS18 to 16S ribosomal RNA. This is Small ribosomal subunit protein bS6 from Borreliella afzelii (strain PKo) (Borrelia afzelii).